The chain runs to 327 residues: Polyadenylate-binding protein-interacting protein 9 (327 aa).

The PAM2-like signature appears at 59–69; the sequence is KLNPLAKEFFP. Over residues 97 to 113 the composition is skewed to basic and acidic residues; the sequence is KQSGEEFDLDAKKDDNT. Residues 97–132 form a disordered region; that stretch reads KQSGEEFDLDAKKDDNTRKRRNYSQGRRRLTGRISK. The Bipartite nuclear localization signal motif lies at 114-125; sequence RKRRNYSQGRRR. Positions 114 to 127 are enriched in basic residues; it reads RKRRNYSQGRRRLT. 2 consecutive RRM domains span residues 141-216 and 238-314; these read RTVY…PSKT and RTIY…PSKT. Residues 308 to 327 are disordered; it reads RVSPSKTPVRPRITRPPSTN.

Its subcellular location is the nucleus. The chain is Polyadenylate-binding protein-interacting protein 9 (CID9) from Arabidopsis thaliana (Mouse-ear cress).